Reading from the N-terminus, the 524-residue chain is Peptide chain release factor 3 (524 aa).

Residues 10–278 form the tr-type G domain; the sequence is DSRRTFAIIS…TFLQFAPAPH (269 aa). GTP-binding positions include 19 to 26, 87 to 91, and 141 to 144; these read SHPDAGKT, DTPGH, and NKLD.

Belongs to the TRAFAC class translation factor GTPase superfamily. Classic translation factor GTPase family. PrfC subfamily.

The protein resides in the cytoplasm. Its function is as follows. Increases the formation of ribosomal termination complexes and stimulates activities of RF-1 and RF-2. It binds guanine nucleotides and has strong preference for UGA stop codons. It may interact directly with the ribosome. The stimulation of RF-1 and RF-2 is significantly reduced by GTP and GDP, but not by GMP. The sequence is that of Peptide chain release factor 3 from Enterococcus faecalis (strain ATCC 700802 / V583).